The following is a 114-amino-acid chain: MGKKGQLVKNVGIEGVSAPSKTCDDEYCPYHGSLKVRGIVLEGKLIRARANRTGTVEREYIFYDSKYKRYERRRSRIHVHIPSCLEVKEGDNVIIGESRPIAKSISFVILGVKR.

The protein belongs to the universal ribosomal protein uS17 family. As to quaternary structure, part of the 30S ribosomal subunit.

Its function is as follows. One of the primary rRNA binding proteins, it binds specifically to the 5'-end of 16S ribosomal RNA. In Sulfolobus acidocaldarius (strain ATCC 33909 / DSM 639 / JCM 8929 / NBRC 15157 / NCIMB 11770), this protein is Small ribosomal subunit protein uS17.